An 87-amino-acid chain; its full sequence is U3-theraphotoxin-Hhn1c (87 aa).

An N-terminal signal peptide occupies residues 1 to 24 (MVNMKASMFLTFAGLVLLFVVCHA). Positions 25–52 (SESEEKEFPKEMLSSIFAVDDDFKQEER) are excised as a propeptide. 3 disulfides stabilise this stretch: Cys54/Cys67, Cys61/Cys72, and Cys66/Cys79.

Belongs to the neurotoxin 10 (Hwtx-1) family. 51 (Hntx-8) subfamily. Hntx-8 sub-subfamily. In terms of tissue distribution, expressed by the venom gland.

It localises to the secreted. Ion channel inhibitor. The chain is U3-theraphotoxin-Hhn1c from Cyriopagopus hainanus (Chinese bird spider).